The following is a 178-amino-acid chain: Adenine phosphoribosyltransferase (178 aa).

The protein belongs to the purine/pyrimidine phosphoribosyltransferase family. Homodimer.

It localises to the cytoplasm. The enzyme catalyses AMP + diphosphate = 5-phospho-alpha-D-ribose 1-diphosphate + adenine. Its pathway is purine metabolism; AMP biosynthesis via salvage pathway; AMP from adenine: step 1/1. Its function is as follows. Catalyzes a salvage reaction resulting in the formation of AMP, that is energically less costly than de novo synthesis. The protein is Adenine phosphoribosyltransferase of Streptomyces clavuligerus.